Consider the following 91-residue polypeptide: Small ribosomal subunit protein uS15c (91 aa).

It belongs to the universal ribosomal protein uS15 family. In terms of assembly, part of the 30S ribosomal subunit.

The protein localises to the plastid. It localises to the chloroplast. The polypeptide is Small ribosomal subunit protein uS15c (rps15) (Ceratophyllum demersum (Rigid hornwort)).